The primary structure comprises 160 residues: Nucleotide-binding protein TERTU_3542 (160 aa).

The protein belongs to the YajQ family.

Its function is as follows. Nucleotide-binding protein. The polypeptide is Nucleotide-binding protein TERTU_3542 (Teredinibacter turnerae (strain ATCC 39867 / T7901)).